Here is a 458-residue protein sequence, read N- to C-terminus: tRNA modification GTPase MnmE (458 aa).

(6S)-5-formyl-5,6,7,8-tetrahydrofolate contacts are provided by Arg-28, Glu-85, and Lys-124. A TrmE-type G domain is found at 220–381 (GMNVVIAGRP…LKEHLKAVMG (162 aa)). A K(+)-binding site is contributed by Asn-230. GTP-binding positions include 230–235 (NAGKSS), 249–255 (TDIEGTT), and 274–277 (DTAG). Ser-234 serves as a coordination point for Mg(2+). 3 residues coordinate K(+): Thr-249, Ile-251, and Thr-254. Mg(2+) is bound at residue Thr-255. Lys-458 contributes to the (6S)-5-formyl-5,6,7,8-tetrahydrofolate binding site.

The protein belongs to the TRAFAC class TrmE-Era-EngA-EngB-Septin-like GTPase superfamily. TrmE GTPase family. In terms of assembly, homodimer. Heterotetramer of two MnmE and two MnmG subunits. Requires K(+) as cofactor.

The protein resides in the cytoplasm. Exhibits a very high intrinsic GTPase hydrolysis rate. Involved in the addition of a carboxymethylaminomethyl (cmnm) group at the wobble position (U34) of certain tRNAs, forming tRNA-cmnm(5)s(2)U34. In Chromohalobacter salexigens (strain ATCC BAA-138 / DSM 3043 / CIP 106854 / NCIMB 13768 / 1H11), this protein is tRNA modification GTPase MnmE.